Consider the following 628-residue polypeptide: U-box domain-containing protein 10 (628 aa).

The U-box domain maps to 242–316 (TIPEDFLCPI…SQWCTKHNIE (75 aa)). ARM repeat units lie at residues 373 to 413 (TDNR…NLSI), 415 to 454 (EHNK…SLSL), 456 to 495 (DENK…NLCI), 497 to 537 (QGNK…VLAS), and 539 to 578 (QVAK…CLCK).

It carries out the reaction S-ubiquitinyl-[E2 ubiquitin-conjugating enzyme]-L-cysteine + [acceptor protein]-L-lysine = [E2 ubiquitin-conjugating enzyme]-L-cysteine + N(6)-ubiquitinyl-[acceptor protein]-L-lysine.. It participates in protein modification; protein ubiquitination. Functionally, functions as an E3 ubiquitin ligase. The polypeptide is U-box domain-containing protein 10 (PUB10) (Arabidopsis thaliana (Mouse-ear cress)).